Consider the following 341-residue polypeptide: Methionine import ATP-binding protein MetN (341 aa).

Residues 9 to 247 enclose the ABC transporter domain; it reads ISVQKVNKEI…PRSSITEELF (239 aa). 41-48 contacts ATP; the sequence is GHSGSGKS.

The protein belongs to the ABC transporter superfamily. Methionine importer (TC 3.A.1.24) family. The complex is composed of two ATP-binding proteins (MetN), two transmembrane proteins (MetI) and a solute-binding protein (MetQ).

It localises to the cell inner membrane. It carries out the reaction L-methionine(out) + ATP + H2O = L-methionine(in) + ADP + phosphate + H(+). The enzyme catalyses D-methionine(out) + ATP + H2O = D-methionine(in) + ADP + phosphate + H(+). In terms of biological role, part of the ABC transporter complex MetNIQ involved in methionine import. Responsible for energy coupling to the transport system. The polypeptide is Methionine import ATP-binding protein MetN (Chlamydia caviae (strain ATCC VR-813 / DSM 19441 / 03DC25 / GPIC) (Chlamydophila caviae)).